We begin with the raw amino-acid sequence, 146 residues long: Large ribosomal subunit protein uL15y (146 aa).

2 stretches are compositionally biased toward basic residues: residues 1-14 (MATA…KRGH) and 21-30 (RIGKHRKHPG). Positions 1 to 38 (MATALKKNRKKRGHVSAGHGRIGKHRKHPGGRGNAGGM) are disordered.

Belongs to the universal ribosomal protein uL15 family.

The protein is Large ribosomal subunit protein uL15y (RPL27AB) of Arabidopsis thaliana (Mouse-ear cress).